Here is a 348-residue protein sequence, read N- to C-terminus: Probable dual-specificity RNA methyltransferase RlmN (348 aa).

Residue glutamate 92 is the Proton acceptor of the active site. In terms of domain architecture, Radical SAM core spans 98 to 331 (HPDRVTACIS…NEIRREKGTD (234 aa)). The cysteines at positions 105 and 336 are disulfide-linked. Residues cysteine 112, cysteine 116, and cysteine 119 each contribute to the [4Fe-4S] cluster site. S-adenosyl-L-methionine is bound by residues 159-160 (GE), serine 191, 214-216 (SLH), and asparagine 290. The S-methylcysteine intermediate role is filled by cysteine 336.

This sequence belongs to the radical SAM superfamily. RlmN family. The cofactor is [4Fe-4S] cluster.

The protein resides in the cytoplasm. It carries out the reaction adenosine(2503) in 23S rRNA + 2 reduced [2Fe-2S]-[ferredoxin] + 2 S-adenosyl-L-methionine = 2-methyladenosine(2503) in 23S rRNA + 5'-deoxyadenosine + L-methionine + 2 oxidized [2Fe-2S]-[ferredoxin] + S-adenosyl-L-homocysteine. It catalyses the reaction adenosine(37) in tRNA + 2 reduced [2Fe-2S]-[ferredoxin] + 2 S-adenosyl-L-methionine = 2-methyladenosine(37) in tRNA + 5'-deoxyadenosine + L-methionine + 2 oxidized [2Fe-2S]-[ferredoxin] + S-adenosyl-L-homocysteine. In terms of biological role, specifically methylates position 2 of adenine 2503 in 23S rRNA and position 2 of adenine 37 in tRNAs. In Fervidobacterium nodosum (strain ATCC 35602 / DSM 5306 / Rt17-B1), this protein is Probable dual-specificity RNA methyltransferase RlmN.